The primary structure comprises 536 residues: Glucose-6-phosphate isomerase (536 aa).

Glu345 (proton donor) is an active-site residue. Active-site residues include His376 and Lys505.

Belongs to the GPI family.

The protein localises to the cytoplasm. It carries out the reaction alpha-D-glucose 6-phosphate = beta-D-fructose 6-phosphate. It functions in the pathway carbohydrate biosynthesis; gluconeogenesis. Its pathway is carbohydrate degradation; glycolysis; D-glyceraldehyde 3-phosphate and glycerone phosphate from D-glucose: step 2/4. Functionally, catalyzes the reversible isomerization of glucose-6-phosphate to fructose-6-phosphate. In Ruegeria sp. (strain TM1040) (Silicibacter sp.), this protein is Glucose-6-phosphate isomerase.